Here is a 391-residue protein sequence, read N- to C-terminus: Succinate--CoA ligase [ADP-forming] subunit beta (391 aa).

An ATP-grasp domain is found at 9 to 246; it reads KHLFTEAGIA…LTQEDETEVR (238 aa). Residues K46, 53 to 55, E99, L102, and E107 contribute to the ATP site; that span reads GRG. Residues N199 and D213 each contribute to the Mg(2+) site. Substrate contacts are provided by residues N266 and 323-325; that span reads GIV.

The protein belongs to the succinate/malate CoA ligase beta subunit family. Heterotetramer of two alpha and two beta subunits. Mg(2+) serves as cofactor.

The enzyme catalyses succinate + ATP + CoA = succinyl-CoA + ADP + phosphate. It catalyses the reaction GTP + succinate + CoA = succinyl-CoA + GDP + phosphate. Its pathway is carbohydrate metabolism; tricarboxylic acid cycle; succinate from succinyl-CoA (ligase route): step 1/1. Its function is as follows. Succinyl-CoA synthetase functions in the citric acid cycle (TCA), coupling the hydrolysis of succinyl-CoA to the synthesis of either ATP or GTP and thus represents the only step of substrate-level phosphorylation in the TCA. The beta subunit provides nucleotide specificity of the enzyme and binds the substrate succinate, while the binding sites for coenzyme A and phosphate are found in the alpha subunit. The protein is Succinate--CoA ligase [ADP-forming] subunit beta of Halorhodospira halophila (strain DSM 244 / SL1) (Ectothiorhodospira halophila (strain DSM 244 / SL1)).